Here is a 143-residue protein sequence, read N- to C-terminus: MGKRRRARELALQSLFYVDSTSAPPLEALDLFCQNFPPPKDLAQFFYELAKGVINNQDEIDRLIEQHSNNWKLYRMSAVDLNLMRIAAYEFLFCPDVPRRVSINEAIDIGKRFGTAESGAFINGILDSIHLHLGKEEKAEKKR.

The protein belongs to the NusB family.

In terms of biological role, involved in transcription antitermination. Required for transcription of ribosomal RNA (rRNA) genes. Binds specifically to the boxA antiterminator sequence of the ribosomal RNA (rrn) operons. The polypeptide is Transcription antitermination protein NusB (Desulfatibacillum aliphaticivorans).